Here is a 406-residue protein sequence, read N- to C-terminus: Nicotinate phosphoribosyltransferase (406 aa).

His225 bears the Phosphohistidine; by autocatalysis mark.

Belongs to the NAPRTase family. Transiently phosphorylated on a His residue during the reaction cycle. Phosphorylation strongly increases the affinity for substrates and increases the rate of nicotinate D-ribonucleotide production. Dephosphorylation regenerates the low-affinity form of the enzyme, leading to product release.

The enzyme catalyses nicotinate + 5-phospho-alpha-D-ribose 1-diphosphate + ATP + H2O = nicotinate beta-D-ribonucleotide + ADP + phosphate + diphosphate. It functions in the pathway cofactor biosynthesis; NAD(+) biosynthesis; nicotinate D-ribonucleotide from nicotinate: step 1/1. In terms of biological role, catalyzes the synthesis of beta-nicotinate D-ribonucleotide from nicotinate and 5-phospho-D-ribose 1-phosphate at the expense of ATP. This is Nicotinate phosphoribosyltransferase from Psychromonas ingrahamii (strain DSM 17664 / CCUG 51855 / 37).